The primary structure comprises 124 residues: Large ribosomal subunit protein bL12 (124 aa).

This sequence belongs to the bacterial ribosomal protein bL12 family. As to quaternary structure, homodimer. Part of the ribosomal stalk of the 50S ribosomal subunit. Forms a multimeric L10(L12)X complex, where L10 forms an elongated spine to which 2 to 4 L12 dimers bind in a sequential fashion. Binds GTP-bound translation factors.

Forms part of the ribosomal stalk which helps the ribosome interact with GTP-bound translation factors. Is thus essential for accurate translation. The polypeptide is Large ribosomal subunit protein bL12 (Aromatoleum aromaticum (strain DSM 19018 / LMG 30748 / EbN1) (Azoarcus sp. (strain EbN1))).